We begin with the raw amino-acid sequence, 300 residues long: GTPase Era (300 aa).

Residues Lys4–Lys173 form the Era-type G domain. A G1 region spans residues Gly12–Ser19. Gly12–Ser19 is a GTP binding site. The interval Gln38–Asn42 is G2. The segment at Asp59–Gly62 is G3. Residues Asp59–Phe63 and Ser122–Glu125 each bind GTP. The interval Ser122–Glu125 is G4. Residues Ile152–Ala154 form a G5 region. The 79-residue stretch at Leu204–Asn282 folds into the KH type-2 domain.

It belongs to the TRAFAC class TrmE-Era-EngA-EngB-Septin-like GTPase superfamily. Era GTPase family. As to quaternary structure, monomer.

It localises to the cytoplasm. Its subcellular location is the cell membrane. An essential GTPase that binds both GDP and GTP, with rapid nucleotide exchange. Plays a role in 16S rRNA processing and 30S ribosomal subunit biogenesis and possibly also in cell cycle regulation and energy metabolism. The polypeptide is GTPase Era (Ureaplasma parvum serovar 3 (strain ATCC 27815 / 27 / NCTC 11736)).